Reading from the N-terminus, the 311-residue chain is Ribosomal protein L11 methyltransferase (311 aa).

Residues T163, G184, D206, and N248 each coordinate S-adenosyl-L-methionine.

It belongs to the methyltransferase superfamily. PrmA family.

The protein resides in the cytoplasm. The enzyme catalyses L-lysyl-[protein] + 3 S-adenosyl-L-methionine = N(6),N(6),N(6)-trimethyl-L-lysyl-[protein] + 3 S-adenosyl-L-homocysteine + 3 H(+). Functionally, methylates ribosomal protein L11. The polypeptide is Ribosomal protein L11 methyltransferase (Clostridium acetobutylicum (strain ATCC 824 / DSM 792 / JCM 1419 / IAM 19013 / LMG 5710 / NBRC 13948 / NRRL B-527 / VKM B-1787 / 2291 / W)).